Consider the following 278-residue polypeptide: Dermonecrotic toxin LbSicTox-betaIA1a (278 aa).

His-12 is a catalytic residue. Mg(2+)-binding residues include Glu-32 and Asp-34. His-48 (nucleophile) is an active-site residue. 2 disulfide bridges follow: Cys-52–Cys-58 and Cys-54–Cys-197. A Mg(2+)-binding site is contributed by Asp-92. Asn-258 is a glycosylation site (N-linked (GlcNAc...) asparagine).

The protein belongs to the arthropod phospholipase D family. Class II subfamily. Class IIb sub-subfamily. Expressed by the venom gland.

It is found in the secreted. The enzyme catalyses an N-(acyl)-sphingosylphosphoethanolamine = an N-(acyl)-sphingosyl-1,3-cyclic phosphate + ethanolamine. It catalyses the reaction a 1-acyl-sn-glycero-3-phosphocholine = a 1-acyl-sn-glycero-2,3-cyclic phosphate + choline. The catalysed reaction is a 1-acyl-sn-glycero-3-phosphoethanolamine = a 1-acyl-sn-glycero-2,3-cyclic phosphate + ethanolamine. Its function is as follows. This toxin does not show activity on sphingomyelin (SM) and does not show dermonecrotic activities. This toxin is a member of dermonecrotic toxins that cleave the phosphodiester linkage between the phosphate and headgroup of certain phospholipids (sphingolipid and lysolipid substrates), forming an alcohol (often choline) and a cyclic phosphate. It may act on ceramide phosphoethanolamine (CPE), lysophosphatidylcholine (LPC) and lysophosphatidylethanolamine (LPE), but not on lysophosphatidylserine (LPS), and lysophosphatidylglycerol (LPG). It may act by transphosphatidylation, releasing exclusively cyclic phosphate products as second products. The protein is Dermonecrotic toxin LbSicTox-betaIA1a of Loxosceles boneti (North American fiddleback spider).